Reading from the N-terminus, the 420-residue chain is Acetyl-CoA acetyltransferase B, mitochondrial (420 aa).

The transit peptide at 1 to 33 (MAFCGPRTAARLSHSTRALHYTHRSFASPRTLN) directs the protein to the mitochondrion. Residue cysteine 119 is the Acyl-thioester intermediate of the active site. Residues tyrosine 212, 251–253 (RVD), and lysine 256 contribute to the CoA site. Tyrosine 212 is a binding site for K(+). Residues alanine 273 and alanine 274 each contribute to the K(+) site. Serine 277 serves as a coordination point for CoA. Valine 374 provides a ligand contact to K(+). The active-site Proton donor/acceptor is the cysteine 406.

This sequence belongs to the thiolase-like superfamily. Thiolase family. Homotetramer.

The protein localises to the mitochondrion. The enzyme catalyses 2 acetyl-CoA = acetoacetyl-CoA + CoA. It carries out the reaction propanoyl-CoA + acetyl-CoA = 2-methyl-3-oxobutanoyl-CoA + CoA. Its pathway is lipid metabolism; fatty acid beta-oxidation. Functionally, this is one of the enzymes that catalyzes the last step of the mitochondrial beta-oxidation pathway, an aerobic process breaking down fatty acids into acetyl-CoA. Using free coenzyme A/CoA, catalyzes the thiolytic cleavage of medium- to long-chain 3-oxoacyl-CoAs into acetyl-CoA and a fatty acyl-CoA shortened by two carbon atoms. The activity of the enzyme is reversible and it can also catalyze the condensation of two acetyl-CoA molecules into acetoacetyl-CoA. Thereby, it plays a major role in ketone body metabolism. This chain is Acetyl-CoA acetyltransferase B, mitochondrial (acat1-b), found in Xenopus laevis (African clawed frog).